Consider the following 205-residue polypeptide: Small ribosomal subunit protein uS2 (205 aa).

The protein belongs to the universal ribosomal protein uS2 family.

The protein is Small ribosomal subunit protein uS2 of Methanoculleus marisnigri (strain ATCC 35101 / DSM 1498 / JR1).